Consider the following 124-residue polypeptide: Modulator protein MzrA (124 aa).

At 1-7 (MINRRMK) the chain is on the cytoplasmic side. The chain crosses the membrane as a helical span at residues 8 to 28 (TGFVFHLLLLLLPLVVLVTSS). Residues 29-124 (RRTADDVTLH…KLSQQPFKLG (96 aa)) lie on the Periplasmic side of the membrane.

Belongs to the MzrA family. Interacts with EnvZ.

It is found in the cell inner membrane. Functionally, modulates the activity of the EnvZ/OmpR two-component regulatory system, probably by directly modulating EnvZ enzymatic activity and increasing stability of phosphorylated OmpR. This is Modulator protein MzrA from Musicola paradisiaca (strain Ech703) (Dickeya paradisiaca).